Here is a 147-residue protein sequence, read N- to C-terminus: MRTYTPKPGDINRQWHVIDATDVVLGRLASQTATLLRGKHKPTFASHMDMGDFVIIINAEKVALTGAKLEQKRAYRHSGYPGGLTSVNYAELLESNPVRAVEKAIKGMLPKNSLAAQQLGKLKVYAGPEHPHAAQQPKTFEITQVAQ.

Belongs to the universal ribosomal protein uL13 family. Part of the 50S ribosomal subunit.

Its function is as follows. This protein is one of the early assembly proteins of the 50S ribosomal subunit, although it is not seen to bind rRNA by itself. It is important during the early stages of 50S assembly. This Paenarthrobacter aurescens (strain TC1) protein is Large ribosomal subunit protein uL13.